A 349-amino-acid polypeptide reads, in one-letter code: Biotin synthase (349 aa).

Residues 60–287 form the Radical SAM core domain; it reads GDVELATLLS…KARVRLSAGR (228 aa). C75, C79, and C82 together coordinate [4Fe-4S] cluster. Residues C119, C150, C210, and R282 each contribute to the [2Fe-2S] cluster site.

The protein belongs to the radical SAM superfamily. Biotin synthase family. In terms of assembly, homodimer. It depends on [4Fe-4S] cluster as a cofactor. Requires [2Fe-2S] cluster as cofactor.

The catalysed reaction is (4R,5S)-dethiobiotin + (sulfur carrier)-SH + 2 reduced [2Fe-2S]-[ferredoxin] + 2 S-adenosyl-L-methionine = (sulfur carrier)-H + biotin + 2 5'-deoxyadenosine + 2 L-methionine + 2 oxidized [2Fe-2S]-[ferredoxin]. It functions in the pathway cofactor biosynthesis; biotin biosynthesis; biotin from 7,8-diaminononanoate: step 2/2. Its function is as follows. Catalyzes the conversion of dethiobiotin (DTB) to biotin by the insertion of a sulfur atom into dethiobiotin via a radical-based mechanism. The polypeptide is Biotin synthase (Albidiferax ferrireducens (strain ATCC BAA-621 / DSM 15236 / T118) (Rhodoferax ferrireducens)).